Reading from the N-terminus, the 104-residue chain is Large ribosomal subunit protein bL21 (104 aa).

The protein belongs to the bacterial ribosomal protein bL21 family. As to quaternary structure, part of the 50S ribosomal subunit. Contacts protein L20.

This protein binds to 23S rRNA in the presence of protein L20. In Elusimicrobium minutum (strain Pei191), this protein is Large ribosomal subunit protein bL21.